The sequence spans 469 residues: 3-isopropylmalate dehydratase large subunit (469 aa).

Residues Cys347, Cys410, and Cys413 each contribute to the [4Fe-4S] cluster site.

Belongs to the aconitase/IPM isomerase family. LeuC type 1 subfamily. Heterodimer of LeuC and LeuD. It depends on [4Fe-4S] cluster as a cofactor.

It carries out the reaction (2R,3S)-3-isopropylmalate = (2S)-2-isopropylmalate. It functions in the pathway amino-acid biosynthesis; L-leucine biosynthesis; L-leucine from 3-methyl-2-oxobutanoate: step 2/4. Catalyzes the isomerization between 2-isopropylmalate and 3-isopropylmalate, via the formation of 2-isopropylmaleate. The chain is 3-isopropylmalate dehydratase large subunit from Burkholderia ambifaria (strain MC40-6).